Here is a 502-residue protein sequence, read N- to C-terminus: Cytochrome P450 monooxygenase prhN (502 aa).

The helical transmembrane segment at 14 to 30 (SGALLIVGILLLRWALW) threads the bilayer. An N-linked (GlcNAc...) asparagine glycan is attached at Asn165. Cys443 is a binding site for heme. N-linked (GlcNAc...) asparagine glycosylation occurs at Asn474.

It belongs to the cytochrome P450 family. It depends on heme as a cofactor.

The protein localises to the membrane. The protein operates within secondary metabolite biosynthesis; terpenoid biosynthesis. Functionally, cytochrome P450 monooxygenase; part of the gene cluster that mediates the biosynthesis of paraherquonin, a meroterpenoid with a unique, highly congested hexacyclic molecular architecture. The first step of the pathway is the synthesis of 3,5-dimethylorsellinic acid (DMOA) by the polyketide synthase prhL. Synthesis of DMOA is followed by farnesylation by the prenyltransferase prhE, methylesterification by the methyl-transferase prhM, epoxidation of the prenyl chain by the flavin-dependent monooxygenase prhF, and cyclization of the farnesyl moiety by the terpene cyclase prhH, to yield the tetracyclic intermediate, protoaustinoid A. The short chain dehydrogenase prhI then oxidizes the C-3 alcohol group of the terpene cyclase product to transform protoaustinoid A into protoaustinoid B. The FAD-binding monooxygenase prhJ catalyzes the oxidation of protoaustinoid B into preaustinoid A which is further oxidized into preaustinoid A1 by FAD-binding monooxygenase phrK. Finally, prhA leads to berkeleydione via the berkeleyone B intermediate. PrhA is a multifunctional dioxygenase that first desaturates at C5-C6 to form berkeleyone B, followed by rearrangement of the A/B-ring to form the cycloheptadiene moiety in berkeleydione. Berkeleydione serves as the key intermediate for the biosynthesis of paraherquonin as well as many other meroterpenoids. The cytochrome P450 monooxygenases prhB, prhD, and prhN, as well as the isomerase prhC, are probably involved in the late stage of paraherquonin biosynthesis, after the production of berkeleydione. Especially prhC might be a multifunctional enzyme that catalyzes the D-ring expansion via intramolecular methoxy rearrangement, as well as the hydrolysis of the expanded D-ring. This Penicillium brasilianum protein is Cytochrome P450 monooxygenase prhN.